Here is a 58-residue protein sequence, read N- to C-terminus: Cecropin-A (58 aa).

The signal sequence occupies residues 1–23; that stretch reads MNFSKIFIFVVLAVLLLCSQTEA. Leucine amide is present on L57.

The protein belongs to the cecropin family. Relatively abundant in head, thorax and to a lesser extent in abdominal carcass and anterior midgut.

It is found in the secreted. Antibacterial activity against several Gram-positive and Gram-negative bacteria. Antifungal activity against A.fumigatus, B.cinerea, F.culmorum, F.oxysporum, N.crassa, C.albicans, C.neoformans and S.cerevisiae. The chain is Cecropin-A (CecA) from Anopheles gambiae (African malaria mosquito).